A 545-amino-acid polypeptide reads, in one-letter code: uncharacterized protein (545 aa).

Composition is skewed to basic and acidic residues over residues 34-44 (PMNKQNEKLKT) and 53-63 (PRNDYSRRVSR). Disordered stretches follow at residues 34–98 (PMNK…PESN), 269–296 (QNGT…PQDS), and 415–444 (ERPQ…SAPE). Residues 69-78 (TDSSEQQITA) are compositionally biased toward polar residues. The span at 415 to 428 (ERPQRKTEHVKTPE) shows a compositional bias: basic and acidic residues. The segment covering 429 to 441 (ENLQTKNPTTMTS) has biased composition (polar residues).

This is an uncharacterized protein from Mus musculus (Mouse).